Consider the following 77-residue polypeptide: U8-lycotoxin-Ls1i (77 aa).

The first 20 residues, methionine 1–valine 20, serve as a signal peptide directing secretion. A propeptide spanning residues glutamine 21–arginine 26 is cleaved from the precursor.

It belongs to the neurotoxin 19 (CSTX) family. 08 (U8-Lctx) subfamily. Post-translationally, contains 4 disulfide bonds. As to expression, expressed by the venom gland.

The protein resides in the secreted. The protein is U8-lycotoxin-Ls1i of Lycosa singoriensis (Wolf spider).